Here is a 180-residue protein sequence, read N- to C-terminus: Pyruvate synthase subunit PorC (180 aa).

In terms of assembly, heterotetramer of one alpha, one beta, one delta and one gamma chain.

The enzyme catalyses 2 oxidized [2Fe-2S]-[ferredoxin] + pyruvate + CoA = 2 reduced [2Fe-2S]-[ferredoxin] + acetyl-CoA + CO2 + H(+). The polypeptide is Pyruvate synthase subunit PorC (porC) (Methanothermobacter thermautotrophicus (strain ATCC 29096 / DSM 1053 / JCM 10044 / NBRC 100330 / Delta H) (Methanobacterium thermoautotrophicum)).